Here is a 620-residue protein sequence, read N- to C-terminus: Two-component response regulator ORR27 (620 aa).

Residues 24 to 138 (HVLVVDDDAA…AIKFIWKHVL (115 aa)) enclose the Response regulatory domain. Aspartate 76 bears the 4-aspartylphosphate mark. Disordered stretches follow at residues 171–197 (PPAV…AELS) and 215–257 (VWSS…LEAT). The myb-like GARP DNA-binding region spans 261 to 321 (KKVRTRFTWT…HLQKYRSWLE (61 aa)). Over residues 431–456 (SVSRDAHENGNSQARGSAMSNGTSGT) the composition is skewed to polar residues. 3 disordered regions span residues 431 to 457 (SVSR…SGTR), 501 to 523 (SDQN…NSKT), and 596 to 620 (PPRG…SSGP). The segment covering 603–620 (EIASHENTNGKNGASSGP) has biased composition (polar residues).

The protein belongs to the ARR family. Type-B subfamily. Two-component system major event consists of a His-to-Asp phosphorelay between a sensor histidine kinase (HK) and a response regulator (RR). In plants, the His-to-Asp phosphorelay involves an additional intermediate named Histidine-containing phosphotransfer protein (HPt). This multistep phosphorelay consists of a His-Asp-His-Asp sequential transfer of a phosphate group between first a His and an Asp of the HK protein, followed by the transfer to a conserved His of the HPt protein and finally the transfer to an Asp in the receiver domain of the RR protein.

The protein resides in the nucleus. In terms of biological role, transcriptional activator that binds specific DNA sequence. Functions as a response regulator involved in His-to-Asp phosphorelay signal transduction system. Phosphorylation of the Asp residue in the receiver domain activates the ability of the protein to promote the transcription of target genes. May directly activate some type-A response regulators in response to cytokinins. The protein is Two-component response regulator ORR27 of Oryza sativa subsp. japonica (Rice).